The sequence spans 352 residues: Gap junction alpha-4 protein (352 aa).

The Cytoplasmic portion of the chain corresponds to 2-23; the sequence is GDWEFLEKLLDQVQEHSTSIGK. A helical transmembrane segment spans residues 24–46; the sequence is IWLMVLFIFRILILGLAGESVWG. The Extracellular portion of the chain corresponds to 47-76; the sequence is DEQSDFICNTEQPGCTNVCYDKAFPISHVR. The helical transmembrane segment at 77–99 threads the bilayer; sequence YWVLQFLFVSTPTLFYLGHVIYL. The Cytoplasmic segment spans residues 100 to 153; it reads SRREEKLKQKESELRALDDKEQVEQAIAIIEKKKMKLYIQEDGTVKIKGALMCT. A helical membrane pass occupies residues 154 to 176; the sequence is YLTSVIFKSLFEAGFLLGQWYLY. The Extracellular portion of the chain corresponds to 177-208; it reads GFVMTPIYVCERVPCPHKVDCFVSRPMEKTIF. A helical transmembrane segment spans residues 209 to 231; it reads IVFMLVVSLISLFLNVLELIHLV. At 232 to 352 the chain is on the cytoplasmic side; sequence CKSMIDTLKK…SSSASKKQYV (121 aa). The disordered stretch occupies residues 330–352; it reads KTHSTMEKPSTRASSSASKKQYV. Residues 340 to 352 show a composition bias toward polar residues; sequence TRASSSASKKQYV.

The protein belongs to the connexin family. Alpha-type (group II) subfamily. A connexon is composed of a hexamer of connexins.

Its subcellular location is the cell membrane. The protein resides in the cell junction. It is found in the gap junction. One gap junction consists of a cluster of closely packed pairs of transmembrane channels, the connexons, through which materials of low MW diffuse from one cell to a neighboring cell. This is Gap junction alpha-4 protein (gja4) from Xenopus tropicalis (Western clawed frog).